The sequence spans 164 residues: Heat shock protein beta-6 (164 aa).

Positions methionine 1 to glycine 72 are involved in stabilization of the HSPB1:HSBP6 heterodimer. A Phosphoserine modification is found at serine 16. A sHSP domain is found at arginine 56 to alanine 163. Position 66 is a deamidated glutamine (glutamine 66). The residue at position 157 (serine 157) is a Phosphoserine.

The protein belongs to the small heat shock protein (HSP20) family. As to quaternary structure, homodimer. Small heat shock proteins form high molecular mass oligomers containing variable number of monomers; these oligomers display a very flexible quaternary structure easily exchanging their subunits. Heterooligomer with HSPB1; formed through oligomerization of HSPB1:HSBP6 dimers; subunit exchange leads to formation of at least two different heterooligomeric complexes, differing in variable quantities of HSPB1 and HSPB6 homodimers in addition to HSPB1:HSPB6 heterodimers. Heterooligomer with CRYAB; large heterooligomers consist of CRYAB homodimers and HSPB5:HSPB6 heterodimers but lacking HSPB6 homodimers. Interacts with BAG3. Interacts (phosphorylated) with YWHAZ. Interacts with PDE4A and PDE4D; required for maintenance of the non-phosphorylated state of HSPB6 under basal conditions. Interacts with KDR. Interacts with PRKD1. Phosphorylated at Ser-16 by PKA and probably PKD1K; required to protect cardiomyocytes from apoptosis.

The protein localises to the cytoplasm. It is found in the nucleus. Its subcellular location is the secreted. Its function is as follows. Small heat shock protein which functions as a molecular chaperone probably maintaining denatured proteins in a folding-competent state. Seems to have versatile functions in various biological processes. Plays a role in regulating muscle function such as smooth muscle vasorelaxation and cardiac myocyte contractility. May regulate myocardial angiogenesis implicating KDR. Overexpression mediates cardioprotection and angiogenesis after induced damage. Stabilizes monomeric YWHAZ thereby supporting YWHAZ chaperone-like activity. In Bos taurus (Bovine), this protein is Heat shock protein beta-6 (HSPB6).